The primary structure comprises 585 residues: Membrane protein insertase YidC (585 aa).

A run of 6 helical transmembrane segments spans residues Ser-5–Pro-25, Phe-338–Trp-358, Phe-362–Tyr-382, Leu-432–Phe-452, Ile-482–Leu-502, and Ile-518–Leu-538.

The protein belongs to the OXA1/ALB3/YidC family. Type 1 subfamily. In terms of assembly, interacts with the Sec translocase complex via SecD. Specifically interacts with transmembrane segments of nascent integral membrane proteins during membrane integration.

The protein resides in the cell inner membrane. Functionally, required for the insertion and/or proper folding and/or complex formation of integral membrane proteins into the membrane. Involved in integration of membrane proteins that insert both dependently and independently of the Sec translocase complex, as well as at least some lipoproteins. Aids folding of multispanning membrane proteins. In Chlorobium luteolum (strain DSM 273 / BCRC 81028 / 2530) (Pelodictyon luteolum), this protein is Membrane protein insertase YidC.